A 288-amino-acid chain; its full sequence is Polyamine aminopropyltransferase (288 aa).

The 230-residue stretch at 9–238 folds into the PABS domain; it reads ETLHDQFGQY…GIMTFAWATD (230 aa). Residue Gln33 coordinates S-methyl-5'-thioadenosine. Spermidine contacts are provided by His64 and Asp88. S-methyl-5'-thioadenosine contacts are provided by residues Glu108 and 140–141; that span reads DG. Residue Asp158 is the Proton acceptor of the active site. Residue 158–161 coordinates spermidine; it reads DCTD. Pro165 is an S-methyl-5'-thioadenosine binding site.

The protein belongs to the spermidine/spermine synthase family. In terms of assembly, homodimer or homotetramer.

It is found in the cytoplasm. The catalysed reaction is S-adenosyl 3-(methylsulfanyl)propylamine + putrescine = S-methyl-5'-thioadenosine + spermidine + H(+). The protein operates within amine and polyamine biosynthesis; spermidine biosynthesis; spermidine from putrescine: step 1/1. Its function is as follows. Catalyzes the irreversible transfer of a propylamine group from the amino donor S-adenosylmethioninamine (decarboxy-AdoMet) to putrescine (1,4-diaminobutane) to yield spermidine. The protein is Polyamine aminopropyltransferase of Escherichia coli (strain ATCC 8739 / DSM 1576 / NBRC 3972 / NCIMB 8545 / WDCM 00012 / Crooks).